Consider the following 115-residue polypeptide: Large ribosomal subunit protein bL20 (115 aa).

It belongs to the bacterial ribosomal protein bL20 family.

Functionally, binds directly to 23S ribosomal RNA and is necessary for the in vitro assembly process of the 50S ribosomal subunit. It is not involved in the protein synthesizing functions of that subunit. This chain is Large ribosomal subunit protein bL20, found in Chlorobium phaeobacteroides (strain BS1).